The following is a 274-amino-acid chain: Bis(5'-nucleosyl)-tetraphosphatase, symmetrical (274 aa).

It belongs to the Ap4A hydrolase family.

It catalyses the reaction P(1),P(4)-bis(5'-adenosyl) tetraphosphate + H2O = 2 ADP + 2 H(+). Hydrolyzes diadenosine 5',5'''-P1,P4-tetraphosphate to yield ADP. This is Bis(5'-nucleosyl)-tetraphosphatase, symmetrical from Shewanella sp. (strain W3-18-1).